Consider the following 755-residue polypeptide: Tryptophan 2-monooxygenase (755 aa).

Serine 247, glutamate 267, lysine 275, and arginine 295 together coordinate FMN. Arginine 295 lines the substrate pocket.

Belongs to the tryptophan 2-monooxygenase family. Requires FMN as cofactor.

It catalyses the reaction L-tryptophan + O2 = indole-3-acetamide + CO2 + H2O. It functions in the pathway plant hormone metabolism; auxin biosynthesis. The chain is Tryptophan 2-monooxygenase (tms1) from Agrobacterium tumefaciens (strain Ach5).